A 594-amino-acid chain; its full sequence is Probable pectinesterase/pectinesterase inhibitor 33 (594 aa).

An N-terminal signal peptide occupies residues 1–22 (MLRGIFHICLLASFLLLPFSSA). The tract at residues 28–75 (FTGGTDAPPPWDHNVSPPPETAPSPTPTSSPSTTSPPSPGPVAAPSPI) is disordered. Residues 34–71 (APPPWDHNVSPPPETAPSPTPTSSPSTTSPPSPGPVAA) are compositionally biased toward pro residues. Residues N77, N170, N213, and N226 are each glycosylated (N-linked (GlcNAc...) asparagine). The interval 78–237 (GSVSGDMTWW…SDLIGNCLAV (160 aa)) is pectinesterase inhibitor 33. The tract at residues 280 to 581 (HLVVAQDRSG…TVGSLIAGGS (302 aa)) is pectinesterase 33. T356 and Q386 together coordinate substrate. D409 functions as the Proton donor; for pectinesterase activity in the catalytic mechanism. Residues C423 and C443 are joined by a disulfide bond. The active-site Nucleophile; for pectinesterase activity is D430. Substrate is bound by residues R498 and W500.

This sequence in the N-terminal section; belongs to the PMEI family. The protein in the C-terminal section; belongs to the pectinesterase family. In terms of tissue distribution, expressed in siliques.

The protein localises to the secreted. The protein resides in the cell wall. The catalysed reaction is [(1-&gt;4)-alpha-D-galacturonosyl methyl ester](n) + n H2O = [(1-&gt;4)-alpha-D-galacturonosyl](n) + n methanol + n H(+). The protein operates within glycan metabolism; pectin degradation; 2-dehydro-3-deoxy-D-gluconate from pectin: step 1/5. Functionally, acts in the modification of cell walls via demethylesterification of cell wall pectin. In Arabidopsis thaliana (Mouse-ear cress), this protein is Probable pectinesterase/pectinesterase inhibitor 33 (PME33).